The chain runs to 110 residues: Large ribosomal subunit protein uL22 (110 aa).

It belongs to the universal ribosomal protein uL22 family. As to quaternary structure, part of the 50S ribosomal subunit.

Functionally, this protein binds specifically to 23S rRNA; its binding is stimulated by other ribosomal proteins, e.g. L4, L17, and L20. It is important during the early stages of 50S assembly. It makes multiple contacts with different domains of the 23S rRNA in the assembled 50S subunit and ribosome. In terms of biological role, the globular domain of the protein is located near the polypeptide exit tunnel on the outside of the subunit, while an extended beta-hairpin is found that lines the wall of the exit tunnel in the center of the 70S ribosome. The chain is Large ribosomal subunit protein uL22 from Halorhodospira halophila (strain DSM 244 / SL1) (Ectothiorhodospira halophila (strain DSM 244 / SL1)).